The chain runs to 204 residues: MIGKLKGTIDEIGEDYVLVDVHGVCYVAHCSARTLSKLGSTGEACVLFIETYVREDQLKLFGFMTALEREWFNLLQSVQGVGAKVALAVLSTLPPGELANAIALQDRTAVSRAPGVGPKVAMRLVTELKNRAPAFAGEAINIGLKQELGEGVAAAPVADAVSALTNLGYSRDQAANAIAAAMKTAGEGADSAKLIRLGLKELAR.

The domain I stretch occupies residues 1–64 (MIGKLKGTID…EDQLKLFGFM (64 aa)). The domain II stretch occupies residues 65-143 (TALEREWFNL…AFAGEAINIG (79 aa)). Residues 144–151 (LKQELGEG) form a flexible linker region. Residues 152 to 204 (VAAAPVADAVSALTNLGYSRDQAANAIAAAMKTAGEGADSAKLIRLGLKELAR) form a domain III region.

This sequence belongs to the RuvA family. In terms of assembly, homotetramer. Forms an RuvA(8)-RuvB(12)-Holliday junction (HJ) complex. HJ DNA is sandwiched between 2 RuvA tetramers; dsDNA enters through RuvA and exits via RuvB. An RuvB hexamer assembles on each DNA strand where it exits the tetramer. Each RuvB hexamer is contacted by two RuvA subunits (via domain III) on 2 adjacent RuvB subunits; this complex drives branch migration. In the full resolvosome a probable DNA-RuvA(4)-RuvB(12)-RuvC(2) complex forms which resolves the HJ.

It is found in the cytoplasm. The RuvA-RuvB-RuvC complex processes Holliday junction (HJ) DNA during genetic recombination and DNA repair, while the RuvA-RuvB complex plays an important role in the rescue of blocked DNA replication forks via replication fork reversal (RFR). RuvA specifically binds to HJ cruciform DNA, conferring on it an open structure. The RuvB hexamer acts as an ATP-dependent pump, pulling dsDNA into and through the RuvAB complex. HJ branch migration allows RuvC to scan DNA until it finds its consensus sequence, where it cleaves and resolves the cruciform DNA. The sequence is that of Holliday junction branch migration complex subunit RuvA from Rhizobium johnstonii (strain DSM 114642 / LMG 32736 / 3841) (Rhizobium leguminosarum bv. viciae).